Here is a 277-residue protein sequence, read N- to C-terminus: Large ribosomal subunit protein uL2 (277 aa).

The segment at 222-277 is disordered; sequence GVAMNPVDHPHGGGEGRTSGGRHPVSPWGKPTKGKRTRSNKATDKFIMRTRHQRKK.

This sequence belongs to the universal ribosomal protein uL2 family. As to quaternary structure, part of the 50S ribosomal subunit. Forms a bridge to the 30S subunit in the 70S ribosome.

Functionally, one of the primary rRNA binding proteins. Required for association of the 30S and 50S subunits to form the 70S ribosome, for tRNA binding and peptide bond formation. It has been suggested to have peptidyltransferase activity; this is somewhat controversial. Makes several contacts with the 16S rRNA in the 70S ribosome. The sequence is that of Large ribosomal subunit protein uL2 from Bartonella henselae (strain ATCC 49882 / DSM 28221 / CCUG 30454 / Houston 1) (Rochalimaea henselae).